The chain runs to 597 residues: UvrABC system protein C (597 aa).

Residues 15-93 (DNPGVYQYYD…IKTLQPRYNV (79 aa)) enclose the GIY-YIG domain. Residues 207–242 (KESLKDFKKLMNNYAQNLQFEEAQKIKEKIEVLENY) enclose the UVR domain.

It belongs to the UvrC family. As to quaternary structure, interacts with UvrB in an incision complex.

It localises to the cytoplasm. In terms of biological role, the UvrABC repair system catalyzes the recognition and processing of DNA lesions. UvrC both incises the 5' and 3' sides of the lesion. The N-terminal half is responsible for the 3' incision and the C-terminal half is responsible for the 5' incision. This Flavobacterium johnsoniae (strain ATCC 17061 / DSM 2064 / JCM 8514 / BCRC 14874 / CCUG 350202 / NBRC 14942 / NCIMB 11054 / UW101) (Cytophaga johnsonae) protein is UvrABC system protein C.